Here is a 95-residue protein sequence, read N- to C-terminus: Large ribosomal subunit protein bL25 (95 aa).

It belongs to the bacterial ribosomal protein bL25 family. Part of the 50S ribosomal subunit; part of the 5S rRNA/L5/L18/L25 subcomplex. Contacts the 5S rRNA. Binds to the 5S rRNA independently of L5 and L18.

This is one of the proteins that binds to the 5S RNA in the ribosome where it forms part of the central protuberance. The sequence is that of Large ribosomal subunit protein bL25 from Haemophilus influenzae (strain 86-028NP).